A 447-amino-acid polypeptide reads, in one-letter code: Peptide chain release factor 1, mitochondrial (447 aa).

A mitochondrion-targeting transit peptide spans 1 to 63 (MNRRHLFAWL…LLNKNCSRRY (63 aa)). Positions 299-363 (PKDLRIDTFR…LRARLYQQII (65 aa)) are GGQ domain. Positions 313-315 (GGQ) match the GGQ motif. Gln-315 carries the post-translational modification N5-methylglutamine.

It belongs to the prokaryotic/mitochondrial release factor family. Methylation of glutamine in the GGQ triplet by HEMK1 is conserved from bacteria to mammals.

The protein resides in the mitochondrion. Mitochondrial peptide chain release factor that directs the termination of translation in response to the peptide chain non-canonical stop codons AGG and AGA. Non-canonical termination codons AGG and AGA are found at the end of MT-CO1/COX1 and MT-ND6/ND6 open reading frames, respectively. Recognizes non-canonical stop codons via a network of interactions between the codon, MTRF1 and the ribosomal RNA (rRNA): in contrast to other translation release factors, which identify the codon in the A-site via direct interactions of amino acid side chains with the bases, MTRF1 repositions the first 2 bases of the stop codon to use an intricate network of interactions that includes residues of the release factor, the rRNA of the small ribosomal subunit, as well as neighboring bases of the mRNA. The polypeptide is Peptide chain release factor 1, mitochondrial (MTRF1) (Bos taurus (Bovine)).